The following is a 350-amino-acid chain: Cell division protein ZipA (350 aa).

At 1 to 6 (MEDLQL) the chain is on the periplasmic side. A helical membrane pass occupies residues 7 to 27 (VLFVLGAIAIVAVLVHGFWSI). At 28-350 (RKQQPRTIKE…QYLARIRANA (323 aa)) the chain is on the cytoplasmic side. Disordered stretches follow at residues 36-55 (KEQP…AEGF), 65-136 (VRKL…PSAR), and 187-213 (RVPA…EEPL). Composition is skewed to basic and acidic residues over residues 65 to 109 (VRKL…ESRA) and 116 to 131 (AAHE…HEEP).

Belongs to the ZipA family. As to quaternary structure, interacts with FtsZ via their C-terminal domains.

The protein localises to the cell inner membrane. Its function is as follows. Essential cell division protein that stabilizes the FtsZ protofilaments by cross-linking them and that serves as a cytoplasmic membrane anchor for the Z ring. Also required for the recruitment to the septal ring of downstream cell division proteins. In Shewanella amazonensis (strain ATCC BAA-1098 / SB2B), this protein is Cell division protein ZipA.